The primary structure comprises 184 residues: GMP synthase [glutamine-hydrolyzing] subunit A (184 aa).

The Glutamine amidotransferase type-1 domain occupies 3–184; sequence HIAVIDNHGQ…VFKNFIARCQ (182 aa). Cys-75 serves as the catalytic Nucleophile. Active-site residues include His-163 and Glu-165.

As to quaternary structure, heterodimer composed of a glutamine amidotransferase subunit (A) and a GMP-binding subunit (B).

The catalysed reaction is XMP + L-glutamine + ATP + H2O = GMP + L-glutamate + AMP + diphosphate + 2 H(+). The protein operates within purine metabolism; GMP biosynthesis; GMP from XMP (L-Gln route): step 1/1. Catalyzes the synthesis of GMP from XMP. The polypeptide is GMP synthase [glutamine-hydrolyzing] subunit A (Haloquadratum walsbyi (strain DSM 16790 / HBSQ001)).